The primary structure comprises 98 residues: NADH-ubiquinone oxidoreductase chain 4L (98 aa).

A run of 3 helical transmembrane segments spans residues 1–21, 28–48, and 59–79; these read MAPI…GVLI, STLL…TLLI, and APLI…ALLV.

It belongs to the complex I subunit 4L family. As to quaternary structure, core subunit of respiratory chain NADH dehydrogenase (Complex I) which is composed of 45 different subunits.

It is found in the mitochondrion inner membrane. The enzyme catalyses a ubiquinone + NADH + 5 H(+)(in) = a ubiquinol + NAD(+) + 4 H(+)(out). Functionally, core subunit of the mitochondrial membrane respiratory chain NADH dehydrogenase (Complex I) which catalyzes electron transfer from NADH through the respiratory chain, using ubiquinone as an electron acceptor. Part of the enzyme membrane arm which is embedded in the lipid bilayer and involved in proton translocation. The chain is NADH-ubiquinone oxidoreductase chain 4L (MT-ND4L) from Perameles gunnii (Eastern barred bandicoot).